The following is a 246-amino-acid chain: UDP-N-acetyl-D-mannosaminuronic acid transferase (246 aa).

It belongs to the glycosyltransferase 26 family.

The catalysed reaction is UDP-N-acetyl-alpha-D-mannosaminouronate + N-acetyl-alpha-D-glucosaminyl-di-trans,octa-cis-undecaprenyl diphosphate = beta-D-ManNAcA-(1-&gt;4)-alpha-D-GlcNAc-di-trans,octa-cis-undecaprenyl diphosphate + UDP + H(+). It participates in bacterial outer membrane biogenesis; enterobacterial common antigen biosynthesis. Its function is as follows. Catalyzes the synthesis of Und-PP-GlcNAc-ManNAcA (Lipid II), the second lipid-linked intermediate involved in enterobacterial common antigen (ECA) synthesis. In Salmonella dublin (strain CT_02021853), this protein is UDP-N-acetyl-D-mannosaminuronic acid transferase.